A 119-amino-acid chain; its full sequence is Ribonuclease P protein component (119 aa).

This sequence belongs to the RnpA family. In terms of assembly, consists of a catalytic RNA component (M1 or rnpB) and a protein subunit.

The enzyme catalyses Endonucleolytic cleavage of RNA, removing 5'-extranucleotides from tRNA precursor.. Its function is as follows. RNaseP catalyzes the removal of the 5'-leader sequence from pre-tRNA to produce the mature 5'-terminus. It can also cleave other RNA substrates such as 4.5S RNA. The protein component plays an auxiliary but essential role in vivo by binding to the 5'-leader sequence and broadening the substrate specificity of the ribozyme. The sequence is that of Ribonuclease P protein component from Coprothermobacter proteolyticus (strain ATCC 35245 / DSM 5265 / OCM 4 / BT).